The following is a 961-amino-acid chain: Roundabout homolog 4 (961 aa).

The signal sequence occupies residues Met1–Ala37. Ig-like C2-type domains follow at residues Pro42–Ser142 and Glu148–Ser235. 2 cysteine pairs are disulfide-bonded: Cys63–Cys125 and Cys169–Cys218. N-linked (GlcNAc...) asparagine glycans are attached at residues Asn211 and Asn257. 2 Fibronectin type-III domains span residues Thr259–Gln356 and Pro358–Ala453. N-linked (GlcNAc...) asparagine glycans are attached at residues Asn371, Asn400, and Asn407. Residues Ser544–Leu559 show a composition bias toward low complexity. 2 disordered regions span residues Ser544–Pro563 and Gln600–Ser634. Positions Thr623–Ser634 are enriched in polar residues. N-linked (GlcNAc...) asparagine glycans are attached at residues Asn691 and Asn723. Residues Glu726–Val810 form a disordered region. Over residues Leu755–Ser769 the composition is skewed to low complexity. Residues Val770–Phe783 show a composition bias toward polar residues. Residues Asn772 and Asn793 are each glycosylated (N-linked (GlcNAc...) asparagine). Positions Leu784–Ser801 are enriched in low complexity. Residue Ser823 is modified to Phosphoserine.

The protein belongs to the immunoglobulin superfamily. ROBO family. Interacts with SLIT2 and ENAH.

Its function is as follows. Receptor for Slit proteins, at least for SLIT2, and seems to be involved in angiogenesis and vascular patterning. May mediate the inhibition of primary endothelial cell migration by Slit proteins. Involved in the maintenance of endothelial barrier organization and function. The protein is Roundabout homolog 4 (Robo4) of Rattus norvegicus (Rat).